The primary structure comprises 436 residues: Serine--tRNA ligase (436 aa).

Residues 43–55 show a composition bias toward basic and acidic residues; sequence TKSEQLKQKRNEV. Positions 43–68 are disordered; the sequence is TKSEQLKQKRNEVSDQIAQAKRNKED. 237 to 239 is an L-serine binding site; that stretch reads TAE. 268 to 270 is a binding site for ATP; the sequence is RSE. Glu-291 serves as a coordination point for L-serine. 355–358 provides a ligand contact to ATP; sequence EISS. Position 390 (Ser-390) interacts with L-serine.

This sequence belongs to the class-II aminoacyl-tRNA synthetase family. Type-1 seryl-tRNA synthetase subfamily. As to quaternary structure, homodimer. The tRNA molecule binds across the dimer.

It localises to the cytoplasm. It catalyses the reaction tRNA(Ser) + L-serine + ATP = L-seryl-tRNA(Ser) + AMP + diphosphate + H(+). It carries out the reaction tRNA(Sec) + L-serine + ATP = L-seryl-tRNA(Sec) + AMP + diphosphate + H(+). The protein operates within aminoacyl-tRNA biosynthesis; selenocysteinyl-tRNA(Sec) biosynthesis; L-seryl-tRNA(Sec) from L-serine and tRNA(Sec): step 1/1. In terms of biological role, catalyzes the attachment of serine to tRNA(Ser). Is also able to aminoacylate tRNA(Sec) with serine, to form the misacylated tRNA L-seryl-tRNA(Sec), which will be further converted into selenocysteinyl-tRNA(Sec). The polypeptide is Serine--tRNA ligase (Lactobacillus johnsonii (strain CNCM I-12250 / La1 / NCC 533)).